The following is a 497-amino-acid chain: Aspartyl/glutamyl-tRNA(Asn/Gln) amidotransferase subunit B (497 aa).

This sequence belongs to the GatB/GatE family. GatB subfamily. As to quaternary structure, heterotrimer of A, B and C subunits.

The catalysed reaction is L-glutamyl-tRNA(Gln) + L-glutamine + ATP + H2O = L-glutaminyl-tRNA(Gln) + L-glutamate + ADP + phosphate + H(+). It carries out the reaction L-aspartyl-tRNA(Asn) + L-glutamine + ATP + H2O = L-asparaginyl-tRNA(Asn) + L-glutamate + ADP + phosphate + 2 H(+). Its function is as follows. Allows the formation of correctly charged Asn-tRNA(Asn) or Gln-tRNA(Gln) through the transamidation of misacylated Asp-tRNA(Asn) or Glu-tRNA(Gln) in organisms which lack either or both of asparaginyl-tRNA or glutaminyl-tRNA synthetases. The reaction takes place in the presence of glutamine and ATP through an activated phospho-Asp-tRNA(Asn) or phospho-Glu-tRNA(Gln). This is Aspartyl/glutamyl-tRNA(Asn/Gln) amidotransferase subunit B from Nocardioides sp. (strain ATCC BAA-499 / JS614).